The chain runs to 691 residues: Pentatricopeptide repeat-containing protein ATP4, chloroplastic (691 aa).

Low complexity predominate over residues 1–17; that stretch reads MASLPLCRSPSSLLPSW. A chloroplast-targeting transit peptide spans 1 to 35; it reads MASLPLCRSPSSLLPSWPHRPISASFNPKNPSSPV. A disordered region spans residues 1-76; it reads MASLPLCRSP…SSNTRFLWVN (76 aa). The segment covering 24 to 33 has biased composition (polar residues); that stretch reads ASFNPKNPSS. Residues 45–56 show a composition bias toward pro residues; it reads PPQPQDPSPPSD. Polar residues predominate over residues 61–76; it reads GTRPSSSSNTRFLWVN. 10 PPR repeats span residues 163 to 197, 198 to 232, 233 to 267, 268 to 302, 303 to 337, 338 to 372, 373 to 403, 411 to 445, 446 to 480, and 546 to 580; these read KVIL…GVQP, DNAT…GCSP, DMLT…KWQL, DPVI…GVRP, NLVV…QVQP, SRAT…AMGI, DVML…MKAS, DSWS…GFKP, NIFV…GIIP, and KMPY…GIYA. The 86-residue stretch at 592–677 folds into the Smr domain; sequence LHLRGLSVGA…WFLTTNVAAK (86 aa).

This sequence belongs to the PPR family. P subfamily.

It is found in the plastid. The protein localises to the chloroplast stroma. Its function is as follows. Involved in translation and accumulation of chloroplast ATP synthase subunits. Interacts with the 5'-UTR of the chloroplast bicistronic atpB and atpE mRNA and activates its translation by facilitating ribosome association with the mRNA. Required for accumulation and activity of the chloroplast ATP synthase. Enhances atpA translation and is required for accumulation of specific processed atpF and psaJ transcripts. Required for the stabilization of bicistronic rpl16 and rpl14 mRNAs. The protein is Pentatricopeptide repeat-containing protein ATP4, chloroplastic of Zea mays (Maize).